Reading from the N-terminus, the 370-residue chain is MSLSRLSVTGVRNLHPVTLSPSPRINILFGDNGSGKTSLLEAIHLLGLARSFRSIRLNPVITYEQPACTVFGQVELPDQHSRALGVSRDRSGEVRIRIDGQSVRSAAELADTLPLQLINPDSFRLLEGAPKLRRQFLDWGVFHVEHRFMSAWQRLQQALRQRNSWLRHGTLDSASDAAWSRELSLASDEIDGYRRAYIQALKPVFETTLKALLDLDGLTLSYYRGWDKDRPLVDVLASSLERDRAMGHTQSGPQRADLRLKVGSHNAAEVLSRGQQKLVVCALRIAQGHLVSEAKRGQCIYLVDDLPSELDAQHRLALCRLLEQLNCQVFITCVDSTVLQEGWGEQTPVSMFHVEHGQITQLHGPSGVKA.

30-37 (GDNGSGKT) is a binding site for ATP.

Belongs to the RecF family.

It localises to the cytoplasm. Functionally, the RecF protein is involved in DNA metabolism; it is required for DNA replication and normal SOS inducibility. RecF binds preferentially to single-stranded, linear DNA. It also seems to bind ATP. This Stutzerimonas stutzeri (strain A1501) (Pseudomonas stutzeri) protein is DNA replication and repair protein RecF.